The following is a 349-amino-acid chain: MDIKNLSLKDIKFPKSWETKPSKIEYMQFVYQEAIDMKVWRKDNEIDILTHHHVTDLSRFFWPNADFEGLVLGAELMVWFFAFDDLFDGGFIDDNENEQYRLVNRMNKVFLEGTIEDDSTGAERMGYYLRNKVRAICGEKRQSTFHRFNSSCVQWVDSIIPFIKLKRNQKSLDFNLYIHHRKFNIGAIPCFLVSEIILDPMSNIECFIWLDSRWIKMSEIICEIIALVNDCVSYEKEIKENGAPLNSLKFIQIEKNLNLQESFEYISNYLNELINQYIELETSFIKSYKPITSNYNSNFIAIVEHLHNMSFANVSWSTQTPRYLSQTQPFLELRRNKKIITKIYDLKNK.

The DDxx(x)D/E motif signature appears at 84–89 (DDLFDG). The NDxxSxxxD/E motif motif lies at 229 to 237 (NDCVSYEKE).

This sequence belongs to the terpene synthase family.

It catalyses the reaction (2E,6E)-farnesyl diphosphate = (3S)-(+)-asterisca-2(9),6-diene + diphosphate. The catalysed reaction is (2E)-geranyl diphosphate = (Z)-beta-ocimene + diphosphate. The enzyme catalyses (2E)-geranyl diphosphate + H2O = linalool + diphosphate. Its function is as follows. Terpene synthase that converts its substrate farnesyl diphosphate (FPP) into the sesquiterpene (3S)-(+)-asterisca-2(9),6-diene. Is also able to convert geranyl diphosphate (GPP) into a mixture of monoterpenes including (Z)-beta-ocimene, allo-ocimene and linalool. The chain is Terpene synthase 2 from Dictyostelium discoideum (Social amoeba).